The primary structure comprises 547 residues: Chaperonin GroEL (547 aa).

ATP contacts are provided by residues 30 to 33 (TLGP), K51, 87 to 91 (DGTTT), G415, 479 to 481 (NAA), and D495. Residues 525-547 (PKEDSPGAGAGMGGMGGMGGMDM) form a disordered region. Gly residues predominate over residues 532–547 (AGAGMGGMGGMGGMDM).

This sequence belongs to the chaperonin (HSP60) family. As to quaternary structure, forms a cylinder of 14 subunits composed of two heptameric rings stacked back-to-back. Interacts with the co-chaperonin GroES.

Its subcellular location is the cytoplasm. The catalysed reaction is ATP + H2O + a folded polypeptide = ADP + phosphate + an unfolded polypeptide.. Together with its co-chaperonin GroES, plays an essential role in assisting protein folding. The GroEL-GroES system forms a nano-cage that allows encapsulation of the non-native substrate proteins and provides a physical environment optimized to promote and accelerate protein folding. The polypeptide is Chaperonin GroEL (Nitrosomonas eutropha (strain DSM 101675 / C91 / Nm57)).